The following is a 436-amino-acid chain: 3-ketoacyl-CoA thiolase (436 aa).

Cysteine 99 serves as the catalytic Acyl-thioester intermediate. Catalysis depends on proton acceptor residues histidine 392 and cysteine 422.

This sequence belongs to the thiolase-like superfamily. Thiolase family. As to quaternary structure, heterotetramer of two alpha chains (FadJ) and two beta chains (FadI).

The protein resides in the cytoplasm. The enzyme catalyses an acyl-CoA + acetyl-CoA = a 3-oxoacyl-CoA + CoA. The protein operates within lipid metabolism; fatty acid beta-oxidation. Functionally, catalyzes the final step of fatty acid oxidation in which acetyl-CoA is released and the CoA ester of a fatty acid two carbons shorter is formed. The chain is 3-ketoacyl-CoA thiolase from Yersinia pseudotuberculosis serotype O:1b (strain IP 31758).